A 244-amino-acid polypeptide reads, in one-letter code: Type III pantothenate kinase (244 aa).

Residue D8 to K15 coordinates ATP. G94–R97 contributes to the substrate binding site. The Proton acceptor role is filled by D96. D117 serves as a coordination point for K(+). Residue T120 coordinates ATP. Substrate is bound at residue T175.

Belongs to the type III pantothenate kinase family. Homodimer. The cofactor is NH4(+). Requires K(+) as cofactor.

Its subcellular location is the cytoplasm. The catalysed reaction is (R)-pantothenate + ATP = (R)-4'-phosphopantothenate + ADP + H(+). Its pathway is cofactor biosynthesis; coenzyme A biosynthesis; CoA from (R)-pantothenate: step 1/5. Catalyzes the phosphorylation of pantothenate (Pan), the first step in CoA biosynthesis. This Porphyromonas gingivalis (strain ATCC 33277 / DSM 20709 / CIP 103683 / JCM 12257 / NCTC 11834 / 2561) protein is Type III pantothenate kinase.